The sequence spans 603 residues: Shugoshin (603 aa).

Residues 11-74 (HIQELQNILD…NVQLRSQVSL (64 aa)) are a coiled coil. Disordered stretches follow at residues 112–164 (ESLP…RSST) and 201–227 (NEIDTNNVNNDNLLSPIPHKKRKSNRR). Low complexity-rich tracts occupy residues 146-157 (SVSTGSAHSTSS) and 201-214 (NEIDTNNVNNDNLL). Positions 218–227 (PHKKRKSNRR) are enriched in basic residues. Positions 304–325 (KQDILDETEKRDTAVNQKKKLE) form a coiled coil. Residues 331–399 (PVEELSSSKN…ESVDFDRPRR (69 aa)) are disordered. Basic residues predominate over residues 362-376 (KVKHSMKSRKPKKNK). Residues 431 to 451 (NIQDLQVKYKKSKKVLEKELK) are a coiled coil. Residues 455 to 467 (KAMKSPKKNEKTF) show a composition bias toward basic and acidic residues. Disordered stretches follow at residues 455-519 (KAMK…HSSF) and 583-603 (HNDTNKSSPKTYRSRSRKNKA). Residues 483 to 512 (RPSSTHSTSSVDAECSHNNSHSENINSSIN) show a composition bias toward low complexity. Over residues 583–593 (HNDTNKSSPKT) the composition is skewed to polar residues. A compositionally biased stretch (basic residues) spans 594 to 603 (YRSRSRKNKA).

It belongs to the shugoshin family.

It localises to the nucleus. The protein resides in the chromosome. Its subcellular location is the centromere. Plays a central role in chromosome cohesion during cell division by preventing premature dissociation of cohesin complex from centromeres after prophase, when most of cohesin complex dissociates from chromosomes arms. This is Shugoshin (SGO1) from Candida glabrata (strain ATCC 2001 / BCRC 20586 / JCM 3761 / NBRC 0622 / NRRL Y-65 / CBS 138) (Yeast).